A 443-amino-acid chain; its full sequence is ATP-dependent protease ATPase subunit HslU (443 aa).

ATP-binding positions include Ile18, 60–65 (GVGKTE), Asp256, Glu321, and Arg393.

This sequence belongs to the ClpX chaperone family. HslU subfamily. A double ring-shaped homohexamer of HslV is capped on each side by a ring-shaped HslU homohexamer. The assembly of the HslU/HslV complex is dependent on binding of ATP.

Its subcellular location is the cytoplasm. In terms of biological role, ATPase subunit of a proteasome-like degradation complex; this subunit has chaperone activity. The binding of ATP and its subsequent hydrolysis by HslU are essential for unfolding of protein substrates subsequently hydrolyzed by HslV. HslU recognizes the N-terminal part of its protein substrates and unfolds these before they are guided to HslV for hydrolysis. The sequence is that of ATP-dependent protease ATPase subunit HslU from Nitrosospira multiformis (strain ATCC 25196 / NCIMB 11849 / C 71).